The sequence spans 476 residues: Ribulose bisphosphate carboxylase large chain (476 aa).

The propeptide occupies 1 to 2 (MS). At Pro-3 the chain carries N-acetylproline. Lys-14 bears the N6,N6,N6-trimethyllysine mark. Substrate contacts are provided by Asn-123 and Thr-173. The active-site Proton acceptor is the Lys-175. A substrate-binding site is contributed by Lys-177. 3 residues coordinate Mg(2+): Lys-201, Asp-203, and Glu-204. An N6-carboxylysine modification is found at Lys-201. His-294 acts as the Proton acceptor in catalysis. The substrate site is built by Arg-295, His-327, and Ser-379.

Belongs to the RuBisCO large chain family. Type I subfamily. Heterohexadecamer of 8 large chains and 8 small chains; disulfide-linked. The disulfide link is formed within the large subunit homodimers. The cofactor is Mg(2+). Post-translationally, the disulfide bond which can form in the large chain dimeric partners within the hexadecamer appears to be associated with oxidative stress and protein turnover.

It localises to the plastid. It is found in the chloroplast. It catalyses the reaction 2 (2R)-3-phosphoglycerate + 2 H(+) = D-ribulose 1,5-bisphosphate + CO2 + H2O. It carries out the reaction D-ribulose 1,5-bisphosphate + O2 = 2-phosphoglycolate + (2R)-3-phosphoglycerate + 2 H(+). In terms of biological role, ruBisCO catalyzes two reactions: the carboxylation of D-ribulose 1,5-bisphosphate, the primary event in carbon dioxide fixation, as well as the oxidative fragmentation of the pentose substrate in the photorespiration process. Both reactions occur simultaneously and in competition at the same active site. This chain is Ribulose bisphosphate carboxylase large chain, found in Brachypodium distachyon (Purple false brome).